Reading from the N-terminus, the 258-residue chain is Tryptophan synthase alpha chain (258 aa).

Residues glutamate 46 and aspartate 57 each act as proton acceptor in the active site.

It belongs to the TrpA family. Tetramer of two alpha and two beta chains.

The enzyme catalyses (1S,2R)-1-C-(indol-3-yl)glycerol 3-phosphate + L-serine = D-glyceraldehyde 3-phosphate + L-tryptophan + H2O. Its pathway is amino-acid biosynthesis; L-tryptophan biosynthesis; L-tryptophan from chorismate: step 5/5. Its function is as follows. The alpha subunit is responsible for the aldol cleavage of indoleglycerol phosphate to indole and glyceraldehyde 3-phosphate. This Phocaeicola vulgatus (strain ATCC 8482 / DSM 1447 / JCM 5826 / CCUG 4940 / NBRC 14291 / NCTC 11154) (Bacteroides vulgatus) protein is Tryptophan synthase alpha chain.